A 472-amino-acid polypeptide reads, in one-letter code: Levansucrase (472 aa).

A signal peptide spans 1 to 29; that stretch reads MNIKKIVKQATVLTFTTALLAGGATQAFA. 3 residues coordinate sucrose: Trp-85, Asp-86, and Ser-164. Asp-86 functions as the Nucleophile in the catalytic mechanism. Asp-241 lines the Ca(2+) pocket. Residues Arg-246 and Asp-247 each contribute to the sucrose site. Residues Gln-272, Leu-308, Asn-310, and Asp-339 each coordinate Ca(2+). Glu-340 lines the sucrose pocket. Residue Glu-342 is the Proton donor/acceptor of the active site. Arg-360 contacts sucrose.

This sequence belongs to the glycosyl hydrolase 68 family.

Its subcellular location is the secreted. It catalyses the reaction [6)-beta-D-fructofuranosyl-(2-&gt;](n) alpha-D-glucopyranoside + sucrose = [6)-beta-D-fructofuranosyl-(2-&gt;](n+1) alpha-D-glucopyranoside + D-glucose. Ca(2+) may play an important structural role and promote stability of levansucrase. Its function is as follows. Catalyzes the synthesis of levan, a fructose polymer, by transferring the fructosyl moiety from sucrose to a growing acceptor molecule. Also displays sucrose hydrolase activity. This chain is Levansucrase, found in Bacillus amyloliquefaciens (Bacillus velezensis).